Here is a 334-residue protein sequence, read N- to C-terminus: Phosphate acyltransferase (334 aa).

The protein belongs to the PlsX family. In terms of assembly, homodimer. Probably interacts with PlsY.

The protein resides in the cytoplasm. The enzyme catalyses a fatty acyl-[ACP] + phosphate = an acyl phosphate + holo-[ACP]. It functions in the pathway lipid metabolism; phospholipid metabolism. Functionally, catalyzes the reversible formation of acyl-phosphate (acyl-PO(4)) from acyl-[acyl-carrier-protein] (acyl-ACP). This enzyme utilizes acyl-ACP as fatty acyl donor, but not acyl-CoA. The protein is Phosphate acyltransferase of Mycoplasmopsis agalactiae (strain NCTC 10123 / CIP 59.7 / PG2) (Mycoplasma agalactiae).